Here is a 115-residue protein sequence, read N- to C-terminus: Aspartate 1-decarboxylase (115 aa).

The active-site Schiff-base intermediate with substrate; via pyruvic acid is the serine 25. A Pyruvic acid (Ser) modification is found at serine 25. Residue threonine 57 participates in substrate binding. Tyrosine 58 acts as the Proton donor in catalysis. 72-74 lines the substrate pocket; that stretch reads GAA.

This sequence belongs to the PanD family. Heterooctamer of four alpha and four beta subunits. Requires pyruvate as cofactor. In terms of processing, is synthesized initially as an inactive proenzyme, which is activated by self-cleavage at a specific serine bond to produce a beta-subunit with a hydroxyl group at its C-terminus and an alpha-subunit with a pyruvoyl group at its N-terminus.

The protein localises to the cytoplasm. It carries out the reaction L-aspartate + H(+) = beta-alanine + CO2. It participates in cofactor biosynthesis; (R)-pantothenate biosynthesis; beta-alanine from L-aspartate: step 1/1. Its function is as follows. Catalyzes the pyruvoyl-dependent decarboxylation of aspartate to produce beta-alanine. In Campylobacter fetus subsp. fetus (strain 82-40), this protein is Aspartate 1-decarboxylase.